Consider the following 715-residue polypeptide: Forkhead box protein P2 (715 aa).

The segment covering 1-28 (MMQESATETISNSSMNQNGMSTLSSQLD) has biased composition (polar residues). 2 disordered regions span residues 1 to 46 (MMQE…EVST) and 281 to 339 (DNGI…TGAS). The segment covering 292–305 (TTNNSSSTTSSNTS) has biased composition (low complexity). Residues 326-337 (ARRDSSSHEETG) show a composition bias toward basic and acidic residues. The C2H2-type zinc finger occupies 346-371 (GVCKWPGCESICEDFGQFLKHLNNEH). The interval 388-409 (VQQLEIQLSKERERLQAMMTHL) is leucine-zipper. The tract at residues 422–426 (PLNLV) is CTBP1-binding. Residues 438–459 (TSPQSLPQTPTTPTAPVTPITQ) are compositionally biased toward low complexity. The interval 438–465 (TSPQSLPQTPTTPTAPVTPITQGPSVIT) is disordered. The fork-head DNA-binding region spans 504–594 (RPPFTYATLI…SQKITGSPTL (91 aa)). Disordered stretches follow at residues 649–668 (LDHI…QPHI) and 678–715 (VIAE…EDLE). Positions 699–715 (LEDDREIEEEPLSEDLE) are enriched in acidic residues.

Forms homodimers and heterodimers with FOXP1 and FOXP4. Dimerization is required for DNA-binding. Interacts with CTBP1. Interacts with FOXP1. Isoform 1 and isoform 3 interact with TBR1. Interacts with ZMYM2. Isoform 1 and isoform 6 are expressed in adult and fetal brain, caudate nucleus and lung.

It is found in the nucleus. Its function is as follows. Transcriptional repressor that may play a role in the specification and differentiation of lung epithelium. May also play a role in developing neural, gastrointestinal and cardiovascular tissues. Can act with CTBP1 to synergistically repress transcription but CTPBP1 is not essential. Plays a role in synapse formation by regulating SRPX2 levels. Involved in neural mechanisms mediating the development of speech and language. The chain is Forkhead box protein P2 (FOXP2) from Homo sapiens (Human).